Reading from the N-terminus, the 309-residue chain is Prepilin leader peptidase/N-methyltransferase (309 aa).

The chain crosses the membrane as a helical span at residues 35 to 55 (MQLAFAIVLGLVVGSFLNVVV). Zn(2+) contacts are provided by C96, C99, C121, and C124. 6 consecutive transmembrane segments (helical) span residues 147–167 (LALFGPSGAALAAFGLCAALL), 183–203 (LTLPLLWAGLCVNLWGTFASL), 207–227 (VIGAIAGYLFLWCILWLFKLL), 230–250 (IEGIGYGDLKLLAALGAWLGW), 253–273 (LPQVVLIAAVAGAAVGLVATW), and 288–308 (FLAAGGAATLFFGTPFYLLLG).

Belongs to the peptidase A24 family. The cofactor is Zn(2+).

The protein resides in the cell inner membrane. The enzyme catalyses Typically cleaves a -Gly-|-Phe- bond to release an N-terminal, basic peptide of 5-8 residues from type IV prepilin, and then N-methylates the new N-terminal amino group, the methyl donor being S-adenosyl-L-methionine.. Plays an essential role in type IV pili and type II pseudopili formation by proteolytically removing the leader sequence from substrate proteins and subsequently monomethylating the alpha-amino group of the newly exposed N-terminal phenylalanine. The polypeptide is Prepilin leader peptidase/N-methyltransferase (gspO) (Burkholderia pseudomallei (strain 1026b)).